Consider the following 209-residue polypeptide: PF03932 family protein CutC (209 aa).

This sequence belongs to the CutC family.

It is found in the cytoplasm. Functionally, might participate in the control of copper homeostasis; data from other bacteria suggests it is not involved. The protein is PF03932 family protein CutC of Enterococcus faecalis (strain ATCC 700802 / V583).